The sequence spans 1230 residues: Ubiquitin carboxyl-terminal hydrolase 15 (1230 aa).

The region spanning 39–179 (EDSFTWNIPD…EGTLNITAYV (141 aa)) is the MATH domain. A USP domain is found at 205–536 (VGFRNQGATC…SAYMLVYIRQ (332 aa)). Catalysis depends on Cys214, which acts as the Nucleophile. His465 functions as the Proton acceptor in the catalytic mechanism.

The protein belongs to the peptidase C19 family. In terms of assembly, interacts with PEX6; promoting association with the PEX1-PEX6 ATPase complex.

The protein resides in the cytoplasm. Its subcellular location is the cytosol. The protein localises to the peroxisome. The catalysed reaction is Thiol-dependent hydrolysis of ester, thioester, amide, peptide and isopeptide bonds formed by the C-terminal Gly of ubiquitin (a 76-residue protein attached to proteins as an intracellular targeting signal).. Functionally, deubiquitinase involved in peroxisome import by mediating deubiquitination of the peroxisomal import receptor PEX5. Catalyzes deubiquitination of both monoubiquitiated and polyubiquitinated forms of PEX5 following its retrotranslocation into the cytosol, resetting PEX5 for a subsequent import cycle. This chain is Ubiquitin carboxyl-terminal hydrolase 15, found in Saccharomyces cerevisiae (strain ATCC 204508 / S288c) (Baker's yeast).